We begin with the raw amino-acid sequence, 265 residues long: Type III pantothenate kinase (265 aa).

Residue 6–13 coordinates ATP; it reads DVGNTHTV. Residue 112 to 115 participates in substrate binding; it reads GADR. The Proton acceptor role is filled by aspartate 114. Aspartate 134 provides a ligand contact to K(+). Threonine 137 is an ATP binding site. Threonine 189 contributes to the substrate binding site.

It belongs to the type III pantothenate kinase family. Homodimer. The cofactor is NH4(+). K(+) serves as cofactor.

The protein resides in the cytoplasm. The catalysed reaction is (R)-pantothenate + ATP = (R)-4'-phosphopantothenate + ADP + H(+). It functions in the pathway cofactor biosynthesis; coenzyme A biosynthesis; CoA from (R)-pantothenate: step 1/5. Catalyzes the phosphorylation of pantothenate (Pan), the first step in CoA biosynthesis. The protein is Type III pantothenate kinase of Streptomyces griseus subsp. griseus (strain JCM 4626 / CBS 651.72 / NBRC 13350 / KCC S-0626 / ISP 5235).